Reading from the N-terminus, the 931-residue chain is Translation initiation factor IF-2 (931 aa).

Residues 32-310 form a disordered region; the sequence is KSASSTVEPP…SSKARKNRLA (279 aa). The span at 50–59 shows a compositional bias: polar residues; that stretch reads FASSGQGNAS. Pro residues predominate over residues 82-96; the sequence is PAAPSAPKPAAPAAP. Positions 156-168 are enriched in low complexity; the sequence is GNAPQGGNNANGA. 3 stretches are compositionally biased toward gly residues: residues 217–238, 248–271, and 281–298; these read RPGQ…GGAK, GQGG…GFQG, and ARGG…GRQG. A tr-type G domain is found at 424–596; the sequence is PRPPVVTVMG…VLLTADAELD (173 aa). Residues 433-440 form a G1 region; the sequence is GHVDHGKT. GTP is bound at residue 433 to 440; sequence GHVDHGKT. Positions 458-462 are G2; that stretch reads GITQR. Residues 483-486 form a G3 region; that stretch reads DTPG. GTP contacts are provided by residues 483–487 and 537–540; these read DTPGH and NKID. Positions 537–540 are G4; it reads NKID. The segment at 573 to 575 is G5; sequence SAK.

Belongs to the TRAFAC class translation factor GTPase superfamily. Classic translation factor GTPase family. IF-2 subfamily.

Its subcellular location is the cytoplasm. Its function is as follows. One of the essential components for the initiation of protein synthesis. Protects formylmethionyl-tRNA from spontaneous hydrolysis and promotes its binding to the 30S ribosomal subunits. Also involved in the hydrolysis of GTP during the formation of the 70S ribosomal complex. This chain is Translation initiation factor IF-2, found in Bifidobacterium adolescentis (strain ATCC 15703 / DSM 20083 / NCTC 11814 / E194a).